The sequence spans 264 residues: Nicotinamide N-methyltransferase (264 aa).

At R18 the chain carries Citrulline; alternate. Positions 20, 25, 63, 69, 85, 87, and 90 each coordinate S-adenosyl-L-methionine. At R132 the chain carries Citrulline; alternate. S-adenosyl-L-methionine is bound by residues 142–143 (DV) and T163. R181 is subject to Citrulline; alternate. 2 residues coordinate nicotinamide: D197 and S213.

Belongs to the class I-like SAM-binding methyltransferase superfamily. NNMT/PNMT/TEMT family. In terms of assembly, monomer. Post-translationally, deiminated by PADI1 and PADI2. Expressed in white adipose tissue and liver (at protein level).

It is found in the cytoplasm. It catalyses the reaction nicotinamide + S-adenosyl-L-methionine = 1-methylnicotinamide + S-adenosyl-L-homocysteine. The protein operates within cofactor metabolism. It functions in the pathway amino-acid degradation. With respect to regulation, inhibited by 6-methoxynicotinamide (JBSNF-000088). In terms of biological role, catalyzes the N-methylation of nicotinamide using the universal methyl donor S-adenosyl-L-methionine to form N1-methylnicotinamide and S-adenosyl-L-homocysteine, a predominant nicotinamide/vitamin B3 clearance pathway. Plays a central role in regulating cellular methylation potential, by consuming S-adenosyl-L-methionine and limiting its availability for other methyltransferases. Actively mediates genome-wide epigenetic and transcriptional changes through hypomethylation of repressive chromatin marks, such as H3K27me3. In a developmental context, contributes to low levels of the repressive histone marks that characterize pluripotent embryonic stem cell pre-implantation state. Acts as a metabolic regulator primarily on white adipose tissue energy expenditure as well as hepatic gluconeogenesis and cholesterol biosynthesis. In white adipocytes, regulates polyamine flux by consuming S-adenosyl-L-methionine which provides for propylamine group in polyamine biosynthesis, whereas by consuming nicotinamide controls NAD(+) levels through the salvage pathway. Via its product N1-methylnicotinamide regulates protein acetylation in hepatocytes, by repressing the ubiquitination and increasing the stability of SIRT1 deacetylase. Can also N-methylate other pyridines structurally related to nicotinamide and play a role in xenobiotic detoxification. This chain is Nicotinamide N-methyltransferase (Nnmt), found in Mus musculus (Mouse).